A 239-amino-acid polypeptide reads, in one-letter code: Phosphoribosylaminoimidazole-succinocarboxamide synthase (239 aa).

It belongs to the SAICAR synthetase family.

It catalyses the reaction 5-amino-1-(5-phospho-D-ribosyl)imidazole-4-carboxylate + L-aspartate + ATP = (2S)-2-[5-amino-1-(5-phospho-beta-D-ribosyl)imidazole-4-carboxamido]succinate + ADP + phosphate + 2 H(+). Its pathway is purine metabolism; IMP biosynthesis via de novo pathway; 5-amino-1-(5-phospho-D-ribosyl)imidazole-4-carboxamide from 5-amino-1-(5-phospho-D-ribosyl)imidazole-4-carboxylate: step 1/2. In Psychrobacter sp. (strain PRwf-1), this protein is Phosphoribosylaminoimidazole-succinocarboxamide synthase.